A 90-amino-acid polypeptide reads, in one-letter code: Small ribosomal subunit protein bS20 (90 aa).

This sequence belongs to the bacterial ribosomal protein bS20 family.

In terms of biological role, binds directly to 16S ribosomal RNA. In Rickettsia akari (strain Hartford), this protein is Small ribosomal subunit protein bS20.